The following is a 347-amino-acid chain: Trace amine-associated receptor 4 (347 aa).

Over 1 to 37 the chain is Extracellular; it reads MNTPDPWSSPEVQFCFAAANSSCPRKARPALVVCAMY. N20 carries an N-linked (GlcNAc...) asparagine glycan. 2 disulfides stabilise this stretch: C23-C187 and C106-C191. The chain crosses the membrane as a helical span at residues 38-58; the sequence is LIMIGAIVMTMLGNMAVIISI. The Cytoplasmic segment spans residues 59 to 69; the sequence is AHFKQLHSPTN. The helical transmembrane segment at 70–90 threads the bilayer; sequence FLILSMATTDFLLSCVVMPFS. Residues 91–110 are Extracellular-facing; sequence MIRSIESCWYFGDLFCKVHS. A helical membrane pass occupies residues 111-129; sequence CCDIMLCTTSIFHLCFISV. At 130–149 the chain is on the cytoplasmic side; that stretch reads DRHYAVCDPLHYVTQITTRV. A helical membrane pass occupies residues 150–170; that stretch reads VGVFLLISWSVPIFFAFGLVF. At 171–197 the chain is on the extracellular side; that stretch reads SELNLIGAEDFVAAIDCTGLCVLIFNK. Residues 175–188 are extracellular Loop 2 (ECL2); sequence LIGAEDFVAAIDCT. A helical transmembrane segment spans residues 198 to 218; that stretch reads LWGVLASFIAFFLPGTVMVGI. The Cytoplasmic portion of the chain corresponds to 219–260; the sequence is YIHIFTVAQKHARQIGTGPRTKQALSESKMKATSKKESKATK. A helical transmembrane segment spans residues 261-281; it reads TLSIVMGVFVLCWLPFFVLTI. Over 282–296 the chain is Extracellular; the sequence is TDPFIDFTTPEDLYN. A helical membrane pass occupies residues 297-317; that stretch reads VFLWLGYFNSTFNPIIYGMFY. Residues 318-347 lie on the Cytoplasmic side of the membrane; sequence PWFRKALRMIVTGTIFRSDSSTSSLHPAHP.

This sequence belongs to the G-protein coupled receptor 1 family. As to expression, specifically expressed in neurons of the olfactory epithelium, to discrete glomeruli predominantly localized to a confined bulb region. Present in the dorsal area of the main olfactory epithelium.

It is found in the cell membrane. Functionally, olfactory receptor specific for 2-phenylethylamine, a trace amine present at high concentration in the urine of carnivore species, playing a key role in fear and avoidance responses. 2-phenylethylamine acts as a kairomone in the chemical detection of carnivore odor and triggers fear in mice. This receptor is probably mediated by the G(s)-class of G-proteins which activate adenylate cyclase. The polypeptide is Trace amine-associated receptor 4 (Mus musculus (Mouse)).